Reading from the N-terminus, the 106-residue chain is Large ribosomal subunit protein uL24 (106 aa).

It belongs to the universal ribosomal protein uL24 family. In terms of assembly, part of the 50S ribosomal subunit.

Its function is as follows. One of two assembly initiator proteins, it binds directly to the 5'-end of the 23S rRNA, where it nucleates assembly of the 50S subunit. Functionally, one of the proteins that surrounds the polypeptide exit tunnel on the outside of the subunit. This chain is Large ribosomal subunit protein uL24, found in Blochmanniella pennsylvanica (strain BPEN).